Consider the following 210-residue polypeptide: Protein GrpE (210 aa).

The disordered stretch occupies residues 191–210 (KGGPKPAEAETNSVFDEKDA).

It belongs to the GrpE family. As to quaternary structure, homodimer.

The protein resides in the cytoplasm. In terms of biological role, participates actively in the response to hyperosmotic and heat shock by preventing the aggregation of stress-denatured proteins, in association with DnaK and GrpE. It is the nucleotide exchange factor for DnaK and may function as a thermosensor. Unfolded proteins bind initially to DnaJ; upon interaction with the DnaJ-bound protein, DnaK hydrolyzes its bound ATP, resulting in the formation of a stable complex. GrpE releases ADP from DnaK; ATP binding to DnaK triggers the release of the substrate protein, thus completing the reaction cycle. Several rounds of ATP-dependent interactions between DnaJ, DnaK and GrpE are required for fully efficient folding. The polypeptide is Protein GrpE (Rhizobium etli (strain CIAT 652)).